The primary structure comprises 611 residues: Glutamine--fructose-6-phosphate aminotransferase [isomerizing] (611 aa).

The Nucleophile; for GATase activity role is filled by Cys-2. Residues 2–219 (CGIVGAVAER…EGDIAEIRRD (218 aa)) form the Glutamine amidotransferase type-2 domain. 2 consecutive SIS domains span residues 287-427 (AADL…VRGT) and 460-601 (IAEL…VDQP). The active-site For Fru-6P isomerization activity is the Lys-606.

Homodimer.

The protein resides in the cytoplasm. It carries out the reaction D-fructose 6-phosphate + L-glutamine = D-glucosamine 6-phosphate + L-glutamate. Catalyzes the first step in hexosamine metabolism, converting fructose-6P into glucosamine-6P using glutamine as a nitrogen source. This is Glutamine--fructose-6-phosphate aminotransferase [isomerizing] from Pseudomonas putida (strain ATCC 47054 / DSM 6125 / CFBP 8728 / NCIMB 11950 / KT2440).